The sequence spans 930 residues: Isoleucine--tRNA ligase (930 aa).

The 'HIGH' region motif lies at 57 to 67 (PYANGNIHVGH). Glutamate 554 provides a ligand contact to L-isoleucyl-5'-AMP. Residues 595–599 (KMSKS) carry the 'KMSKS' region motif. Lysine 598 contributes to the ATP binding site. Zn(2+) is bound by residues cysteine 888, cysteine 891, cysteine 908, and cysteine 911.

Belongs to the class-I aminoacyl-tRNA synthetase family. IleS type 1 subfamily. In terms of assembly, monomer. Requires Zn(2+) as cofactor.

It localises to the cytoplasm. The enzyme catalyses tRNA(Ile) + L-isoleucine + ATP = L-isoleucyl-tRNA(Ile) + AMP + diphosphate. Its function is as follows. Catalyzes the attachment of isoleucine to tRNA(Ile). As IleRS can inadvertently accommodate and process structurally similar amino acids such as valine, to avoid such errors it has two additional distinct tRNA(Ile)-dependent editing activities. One activity is designated as 'pretransfer' editing and involves the hydrolysis of activated Val-AMP. The other activity is designated 'posttransfer' editing and involves deacylation of mischarged Val-tRNA(Ile). The polypeptide is Isoleucine--tRNA ligase (Streptococcus pneumoniae serotype 4 (strain ATCC BAA-334 / TIGR4)).